The following is a 141-amino-acid chain: Ribosome-binding factor A (141 aa).

This sequence belongs to the RbfA family. Monomer. Binds 30S ribosomal subunits, but not 50S ribosomal subunits or 70S ribosomes.

The protein localises to the cytoplasm. One of several proteins that assist in the late maturation steps of the functional core of the 30S ribosomal subunit. Associates with free 30S ribosomal subunits (but not with 30S subunits that are part of 70S ribosomes or polysomes). Required for efficient processing of 16S rRNA. May interact with the 5'-terminal helix region of 16S rRNA. The protein is Ribosome-binding factor A of Afipia carboxidovorans (strain ATCC 49405 / DSM 1227 / KCTC 32145 / OM5) (Oligotropha carboxidovorans).